The primary structure comprises 139 residues: Thioredoxin-like protein Clot (139 aa).

One can recognise a Thioredoxin domain in the interval 1 to 136; that stretch reads MTVEKVDATV…LADKVDAVVN (136 aa). Active-site nucleophile residues include cysteine 49 and cysteine 52. Cysteine 49 and cysteine 52 form a disulfide bridge.

The protein belongs to the thioredoxin family.

Probable thiol-disulfide oxidoreductase that may participate in various redox reactions. In Oryza sativa subsp. japonica (Rice), this protein is Thioredoxin-like protein Clot.